Here is a 233-residue protein sequence, read N- to C-terminus: Glycerol-3-phosphate acyltransferase (233 aa).

The next 5 membrane-spanning stretches (helical) occupy residues 7-27 (WIIIAIICSYLIGAIPFGYII), 94-114 (ISIVFGAAAAIGHIKSIYIGF), 127-147 (VIAINPIIGLSGIGLFFIVAF), 153-173 (SIGSVVASFSVAVMMWIGVLI), and 185-205 (ISYESQIINLVAISLIVLLII).

Belongs to the PlsY family. In terms of assembly, probably interacts with PlsX.

Its subcellular location is the cell membrane. It carries out the reaction an acyl phosphate + sn-glycerol 3-phosphate = a 1-acyl-sn-glycero-3-phosphate + phosphate. The protein operates within lipid metabolism; phospholipid metabolism. Its function is as follows. Catalyzes the transfer of an acyl group from acyl-phosphate (acyl-PO(4)) to glycerol-3-phosphate (G3P) to form lysophosphatidic acid (LPA). This enzyme utilizes acyl-phosphate as fatty acyl donor, but not acyl-CoA or acyl-ACP. The polypeptide is Glycerol-3-phosphate acyltransferase (Acholeplasma laidlawii).